Consider the following 1074-residue polypeptide: MTGPHAAGGSNHRTARLVAIIAGLLGTLMAIATPLLPVEQTTAELNWPQNGVWQSVDAPLIGYVATDLTVTVPCQAAAGLVGPENRNRSVLLSTVPKQAPKAIDRGLLIERINNDLTVIVRNTPVVSAPLEQVLSPDCRYLTFTAHADKVTGEFVGLTQGPDDDDPGEAVRGERSGYDFRPQIVGVFTDLSGPAPEGLQLSATIDTRYSTSPTLLKLLAMIVGVAMTVIALGALHVLDCADGRRHKRFLPSRWWSMTPLDGLVSAMLVWWHFVGANTADDGYILTMARVSEHAGYMANYYRWFGTPESPFGWYYDLLALWAHVSTASVWMRFPTLLMGLACWWVISREVIPRLGAAAKHSRAAAWTAAGLFLAFWLPLNNGLRPEPIIALGILLTWCSVERGVATSRLLPVAVAIIIGALTLFSGPTGIAAVGALLVAIGPLKTIVAAHVSRFGYWALLAPIAAAGTVTIFLIFRDQTLAAELQASSFKSAVGPSLAWFDEHIRYSRLFTTSPDGSVARRFAVLTLLLALAVSIAMTLRKGRIPGTALGPSRRIIGITIISFLAMMFTPTKWTHQFGVFAGLAGCLGALAAVAVTTTAMKSRRNRTVFGAAVLFVTALSFATVNGWWYVSNFGVPWSNSFPEFKFGFTTMLLGLSVLALLVAAWFHFSGRDVSPDRPQRRWQRLLVAPLAVATWALVIFEVVSLTLGMINQYPAWSVGRSNLNALTGKTCGLANDVLVEQNANAGMLTPIGEPAGQALGAVTSLGFGPNGIPSDVSADPVMEQPGTDNFADSDSGVVTGTEVGTEGGTTAAAGINGSRARLPYGLNPATTPVLGSWRSGTQQPAVLRSAWYRLPDRDQAGPLLVVSAAGRFDQGEVEVQWATDEQAAANEPGGSITFGDVGAAPAWRNLRAPLSSIPPEATQIRLVASDDDLAPQHWIALTPPRIPELRTLQEVVGSSDPVMLDWLVGLAFPCQRPFDHRYGVVEVPKWRILPDRFGAEANSPVMDYLGGGPLGITELLLRPSSVPTYLKDDWYRDWGSLQRLTPWYPDAQPARLDLGTATRSGWWSPAPLRLS.

10 consecutive transmembrane segments (helical) span residues A15 to P37, L214 to V236, S251 to V273, I415 to V437, R452 to F474, S516 to L538, T573 to T595, F608 to S630, F645 to F667, and L684 to L706.

It belongs to the emb family.

The protein resides in the cell membrane. In terms of biological role, arabinosyl transferase responsible for the polymerization of arabinose into the arabinan of arabinogalactan. The polypeptide is Probable arabinosyltransferase C (embC) (Mycolicibacterium smegmatis (Mycobacterium smegmatis)).